We begin with the raw amino-acid sequence, 1427 residues long: Protein NPAT (1427 aa).

The segment at 1–318 is interaction with MIZF; the sequence is MLLPSDVARL…EEAIQDILEQ (318 aa). Residues 3 to 35 enclose the LisH domain; that stretch reads LPSDVARLVLGYLQQENLISTCQTFILESSDLK. Required for activation of histone gene transcription and interaction with MIZF stretches follow at residues 5–25 and 121–145; these read SDVA…STCQ and KRQR…YLSG. Residues 199–231 are disordered; sequence KKAHASLMSPGRRKSESQRKSTTLSGPHSTIRN. A Phosphoserine modification is found at serine 207. Residues 218–231 are compositionally biased toward polar residues; that stretch reads KSTTLSGPHSTIRN. The segment at 262 to 338 is mediates transcriptional activation; sequence KLAENINKFL…FDLFDYGKTK (77 aa). Serine 554 and serine 599 each carry phosphoserine. The segment covering 628-644 has biased composition (polar residues); it reads SLSSTKQPSNDSASVEL. Disordered stretches follow at residues 628-669 and 683-732; these read SLSS…VKEE and EKVA…SAEI. The interval 629–653 is required for acceleration of G1 phase; the sequence is LSSTKQPSNDSASVELNHTENEAQA. Positions 654–665 are enriched in low complexity; that stretch reads SKSENSQEPSSS. Residues 695–711 show a composition bias toward polar residues; the sequence is VENSHSLPPESVCSSVG. Phosphoserine; by CDK2 is present on residues serine 775 and serine 779. Required for acceleration of G1 phase regions lie at residues 828-853 and 1039-1054; these read QNED…IQLM and KSEE…SIVP. Disordered regions lie at residues 1095–1121 and 1133–1152; these read FPNL…EKEK and SAIS…KVSP. Positions 1097 to 1114 are enriched in polar residues; sequence NLDSPNVSSTLKPPSNNA. Serine 1100 carries the post-translational modification Phosphoserine; by CDK2. Glycyl lysine isopeptide (Lys-Gly) (interchain with G-Cter in SUMO2) cross-links involve residues lysine 1116 and lysine 1149. Basic and acidic residues predominate over residues 1140-1151; it reads TIRETQSEKKVS. A phosphoserine mark is found at serine 1151 and serine 1200. Lysine 1228 carries the post-translational modification N6-acetyllysine. The interval 1228-1252 is required for acceleration of G1 phase; that stretch reads KDLKQEQTKSASSLITTEMLQDIQR. Disordered regions lie at residues 1253–1327 and 1348–1413; these read HSSV…SENS and SATP…FPAG. At serine 1254 the chain carries Phosphoserine. Phosphothreonine; by CDK2 is present on threonine 1270. The span at 1276 to 1285 shows a compositional bias: basic and acidic residues; that stretch reads GEKHKEEPID. Lysine 1280 participates in a covalent cross-link: Glycyl lysine isopeptide (Lys-Gly) (interchain with G-Cter in SUMO2). The segment at 1325-1349 is required for acceleration of G1 phase; sequence ENSVNMAAHTLMILSRAAISRTTSA. Polar residues predominate over residues 1348–1365; that stretch reads SATPLKDNTQQFRASSRS. Threonine 1350 carries the phosphothreonine; by CDK2 modification. The segment covering 1371-1382 has biased composition (basic and acidic residues); the sequence is KIEELDERERNS. The segment covering 1383–1394 has biased composition (polar residues); that stretch reads RPSSKNLTNSSI. The span at 1396-1406 shows a compositional bias: basic residues; sequence MKKKKIKKKKL.

The protein belongs to the NPAT family. Interacts with the cylin/CDK complexes CCNE1/CDK2 and CCNA1/CDK2. Interacts with BZW1, CASP8AP2, CREBBP, MIZF and YY1. Interacts with the RUVBL1, RUVBL2 and TRRAP subunits of the NuA4 complex. May also interact with GAPDH, NME1, NME2 and STIP1. Post-translationally, phosphorylated at Ser-775, Ser-779, Ser-1100, Thr-1270 and Thr-1350 by CCNE1/CDK2 at G1-S transition and until prophase, which promotes association with histone gene clusters and stimulates activation of histone transcription. Also phosphorylated by CCNA1/CDK2 in vitro. In terms of tissue distribution, ubiquitously expressed.

The protein localises to the nucleus. It is found in the cajal body. In terms of biological role, required for progression through the G1 and S phases of the cell cycle and for S phase entry. Activates transcription of the histone H2A, histone H2B, histone H3 and histone H4 genes in conjunction with MIZF. Also positively regulates the ATM, MIZF and PRKDC promoters. Transcriptional activation may be accomplished at least in part by the recruitment of the NuA4 histone acetyltransferase (HAT) complex to target gene promoters. The protein is Protein NPAT (NPAT) of Homo sapiens (Human).